A 153-amino-acid chain; its full sequence is Cofilin (153 aa).

One can recognise an ADF-H domain in the interval 15–147 (GVAVNDSALQ…AYESVLERVS (133 aa)).

Belongs to the actin-binding proteins ADF family.

Its subcellular location is the cytoplasm. It is found in the cytoskeleton. The protein localises to the nucleus matrix. Its function is as follows. Controls reversibly actin polymerization and depolymerization in a pH-sensitive manner. It has the ability to bind G- and F-actin in a 1:1 ratio of cofilin to actin. Binding to F-actin is regulated by tropomyosin. It is the major component of intranuclear and cytoplasmic actin rods. Required for accumulation of actin at the cell division site via depolymerizing actin at the cell ends. In association with myosin II has a role in the assembly of the contractile ring via severing actin filaments. Involved in the maintenance of the contractile ring once formed. In association with profilin and capping protein, has a role in the mitotic reorganization of the actin cytoskeleton. This Yarrowia lipolytica (strain CLIB 122 / E 150) (Yeast) protein is Cofilin (COF1).